The following is a 256-amino-acid chain: Fructose-1,6-bisphosphatase/inositol-1-monophosphatase (256 aa).

Positions 67, 83, 85, and 86 each coordinate Mg(2+). Substrate is bound by residues 86–88 (DGS), Arg-170, Ile-175, and Arg-194. Asp-201 provides a ligand contact to Mg(2+).

This sequence belongs to the inositol monophosphatase superfamily. FBPase class 4 family. In terms of assembly, homodimer. Requires Mg(2+) as cofactor.

The catalysed reaction is beta-D-fructose 1,6-bisphosphate + H2O = beta-D-fructose 6-phosphate + phosphate. It catalyses the reaction a myo-inositol phosphate + H2O = myo-inositol + phosphate. Functionally, phosphatase with broad specificity; it can dephosphorylate fructose 1,6-bisphosphate (FBP) and inositol-1-phosphate (IMP). However, while possessing a high FBPase activity in vitro, does not participate in gluconeogenesis in vivo. The polypeptide is Fructose-1,6-bisphosphatase/inositol-1-monophosphatase (suhB) (Thermococcus kodakarensis (strain ATCC BAA-918 / JCM 12380 / KOD1) (Pyrococcus kodakaraensis (strain KOD1))).